A 242-amino-acid polypeptide reads, in one-letter code: DNA repair protein RecO (242 aa).

Belongs to the RecO family. In terms of assembly, monomer.

Its function is as follows. Involved in DNA repair and RecF pathway recombination. The chain is DNA repair protein RecO from Shigella boydii serotype 18 (strain CDC 3083-94 / BS512).